A 320-amino-acid polypeptide reads, in one-letter code: MMERMYIPMASPYVTFNREQWSALRASTPLTISDNELSLLQGLNEKMSMTEVSDIYLPLSRLLNLYVGGTQELYQATHTFLGNQDGKVPFIIGIAGSVAVGKSTTARILQTLLSRWPNHPKVDLVTTDGFLYPNKVLEDRGIMKRKGFPESYDLRRFINFLSDVKSGLPEVKAPVYSHLVYDIVPDEWQTVRQPDILIVEGLNVLQPPRGDENDARISEVIVSDFFDFTIYVHAEEKHILQWYVERFKLLRQTAFSDPSSYFKRYASLSDEEATEVATGIWTEINGANLRQNILPTRVRAQLILDKGQNHMVQSVKLRKL.

96–103 (GSVAVGKS) contacts ATP.

This sequence belongs to the prokaryotic pantothenate kinase family.

It localises to the cytoplasm. It catalyses the reaction (R)-pantothenate + ATP = (R)-4'-phosphopantothenate + ADP + H(+). It functions in the pathway cofactor biosynthesis; coenzyme A biosynthesis; CoA from (R)-pantothenate: step 1/5. The protein is Pantothenate kinase of Brevibacillus brevis (strain 47 / JCM 6285 / NBRC 100599).